A 521-amino-acid polypeptide reads, in one-letter code: MALMILPFIGSVSVSESLVALTAVCLVYLILKFFRTEIPAGLRQLPGPKPLPIIGNVLEVGSKPHLSLTAMSKRYGDVFQIQIGMRPVVVLSGSETVRQALIKQGDEFSGRPDLYSFTFINDGKSLAFSTDQAGVCGACRKLAYSALRSFSTLDGTTPEYSCMLEEHICKEGECLINQLNTVMKADGSFDPFRHIVVSVANVICGMCFGRRYDHNDQDLLRLVNLSDEFGQVAGSGNPADFINILRFLPSTTMKKFMTINADFNTFVKKIVGEHYATFDKNNIRDITDSLIDHCEDRKLDENCNVQMSDEKIVGIVNDLFGAGFDTVSTALSWSVMYLVAYPDIQERLFQEIKDNVGLDRTPLLSDRSKVPYLEAFILELFRHSSFLPFTIPHCSAKDTSLNGYFIPKDTCVFINQWQINRDPELWKDPSSFNPDRFLSCNGTEVNKQEGEKVMVFGMGKRRCIGEVIARNEVYRGLAILIQRLQFHEMPGELLDMTPEYGLTMKHKRCHLRATMRARNEQ.

F229 is a binding site for substrate. C463 contributes to the heme binding site.

Belongs to the cytochrome P450 family. Requires heme as cofactor.

The protein localises to the endoplasmic reticulum membrane. It localises to the microsome membrane. The enzyme catalyses an organic molecule + reduced [NADPH--hemoprotein reductase] + O2 = an alcohol + oxidized [NADPH--hemoprotein reductase] + H2O + H(+). Cytochromes P450 are a group of heme-thiolate monooxygenases. They oxidize a variety of structurally unrelated compounds, including steroids, fatty acids, and xenobiotics. The polypeptide is Cytochrome P450 1A1 (cyp1a1) (Chaetodon capistratus (Four-eye butterflyfish)).